We begin with the raw amino-acid sequence, 537 residues long: MAGSKQLVFNEEARKSLLAGVNKVADTVKITLGPKGRYVVIDKATSPIVTNDGVTIAKEIALHDKFENMGAKLVKEVAQKTQDKTGDGTTTATLLAQSMIVEGLKNITSGSNPIEVKKGIDAAVNASVGYIKTTSVPVKDRAKIVQVATISANNDEEIGTLISEAMEKVGYNGLISVEDAKSLETSLDVVKGMQFDRGFISPYMVTDNEKMVCEYEDCSILITDKKISSVKQMIPVLEMVASEGKPLLIIADDVEGEAQAALFLNIIRGALKVCAVKAPGYGDDRKAILEDIAILTGATVISEEKGMKIDGVTKRELGQAHVIRVDSEKTLIVGGRGEKKAVEDRMTLIQSQINIADSEYKKEELKKRLGNLGGGVAVIKVGAVTETELKEKKMRMDDALNATKAAVEEGVVVGGGITLFRAIESLDTLKFEDDRRVGVSIVKRALEEPIRQIAKNSGIEGAEVIAKIREHKNKHYGYNAKTGIYEDLMENGVIDPAKVVRIGLQNAGSIAGLILSTEVLITDFNDEKDQKSAAIII.

Residues 31 to 34 (TLGP), 87 to 91 (DGTTT), Gly-415, and Asp-495 contribute to the ATP site.

The protein belongs to the chaperonin (HSP60) family. As to quaternary structure, forms a cylinder of 14 subunits composed of two heptameric rings stacked back-to-back. Interacts with the co-chaperonin GroES.

The protein localises to the cytoplasm. It catalyses the reaction ATP + H2O + a folded polypeptide = ADP + phosphate + an unfolded polypeptide.. Together with its co-chaperonin GroES, plays an essential role in assisting protein folding. The GroEL-GroES system forms a nano-cage that allows encapsulation of the non-native substrate proteins and provides a physical environment optimized to promote and accelerate protein folding. The protein is Chaperonin GroEL of Methanoregula boonei (strain DSM 21154 / JCM 14090 / 6A8).